The primary structure comprises 346 residues: L-glyceraldehyde 3-phosphate reductase (346 aa).

NADP(+) contacts are provided by Trp-33, Asp-61, Tyr-66, Ser-168, Gln-193, Thr-223, Leu-225, Gln-227, Lys-233, Ser-303, Gln-307, and Asn-311.

It belongs to the shaker potassium channel beta subunit family.

It catalyses the reaction a primary alcohol + NADP(+) = an aldehyde + NADPH + H(+). In terms of biological role, aldo-keto reductase that catalyzes the stereospecific, NADPH-dependent reduction of L-glyceraldehyde 3-phosphate (L-GAP) to L-glycerol 3-phosphate (L-G3P). The sequence is that of L-glyceraldehyde 3-phosphate reductase from Escherichia coli O157:H7.